Here is a 408-residue protein sequence, read N- to C-terminus: MDGLPGRALGAACLLMLAVGSLGPGVWGSPTPPPLPAAPQPPPPPPGAPGGSQDTCTSCGGFRRPEELGRVDGDFLEAVKRHILNRLQMRGRPNITHAVPKAAMVTALRKLHAGKVREDGRVEIPHLDGHASPGADGQERVSEIISFAETDGLASSRVRLYFFISNEGNQNLFVVQASLWLYLKLLPYVLEKGGRRKVRVKVYGQEQGPGDRWAAVEKRVDLKRSGWHTFPLTEPIQALFSRGERRLSLDVQCDSCRELAVVPVFVDPGEESHRPFVVVQARLGDSRHRIRKRGLECDGRTNLCCRQQFFIDFRLIGWNDWIIAPTGYYGNYCEGSCPAYLAGVPGSASSFHTAVVNQYRMRGLNPGTVNSCCIPTKLSTMSMLYFDDEYNIVKRDVPNMIVEECGCA.

The N-terminal stretch at 1–28 (MDGLPGRALGAACLLMLAVGSLGPGVWG) is a signal peptide. Positions 29–60 (SPTPPPLPAAPQPPPPPPGAPGGSQDTCTSCG) are disordered. Positions 29-293 (SPTPPPLPAA…GDSRHRIRKR (265 aa)) are excised as a propeptide. Pro residues predominate over residues 30 to 48 (PTPPPLPAAPQPPPPPPGA). N94 is a glycosylation site (N-linked (GlcNAc...) asparagine). Disulfide bonds link C297–C305, C304–C373, C333–C405, and C337–C407.

This sequence belongs to the TGF-beta family. In terms of assembly, dimeric, linked by one or more disulfide bonds. Inhibin B is a dimer of alpha and beta-B. Activin B is a homodimer of beta-B. Activin AB is a dimer of beta-A and beta-B. Interacts with FST and FSTL3.

The protein resides in the secreted. Inhibins and activins inhibit and activate, respectively, the secretion of follitropin by the pituitary gland. Inhibins/activins are involved in regulating a number of diverse functions such as hypothalamic and pituitary hormone secretion, gonadal hormone secretion, germ cell development and maturation, erythroid differentiation, insulin secretion, nerve cell survival, embryonic axial development or bone growth, depending on their subunit composition. Inhibins appear to oppose the functions of activins. In terms of biological role, activin B is a dimer of alpha and beta-B that plays a role in several essential biological processes including embryonic development, stem cell maintenance and differentiation, haematopoiesis, cell proliferation and wound healing. Signals through type I receptor ACVR1C, abundantly expressed in pancreatic beta cells, and type II receptors like ACVR2A. Upon ligand binding, these receptors phosphorylate intracellular signaling mediators SMAD2 and SMAD3, which form a complex with SMAD4, translocate to the nucleus, and regulate gene expression. Plays a crucial role in the induction of hepcidin by inflammation through activation of ACVR1C and subsequent phosphorylation of SMAD1/5/8. Regulates adipocyte lipid metabolism by decreasing non-esterified fatty acids and glycerol release and increases intracellular triglyceride content. Stimulates wound healing by promoting cell migration and hair follicle regeneration through the JNK and ERK signaling pathways downstream of RHOA. Functionally, inhibin B is a dimer of alpha and beta-B that plays a crucial role in the regulation of the reproductive system by inhibiting the secretion of follicle-stimulating hormone (FSH) from the anterior pituitary gland. Thereby, maintains reproductive homeostasis in both males and females. Acts as a more potent suppressor of FSH release than inhibin A. Functions as competitive receptor antagonist binding activin type II receptors with high affinity in the presence of the TGF-beta type III coreceptor/TGFBR3L. The sequence is that of Inhibin beta B chain (INHBB) from Bos taurus (Bovine).